Reading from the N-terminus, the 209-residue chain is Protein Bel-1 (209 aa).

Disordered regions lie at residues 1 to 30 (MASK…LDLT), 123 to 143 (FLNS…PATS), and 156 to 185 (CSRP…GESG). Polar residues-rich tracts occupy residues 21 to 30 (SHSTSGLDLT) and 132 to 143 (TPKTDPTRPATS).

Transcriptional transactivator that activates the viral internal promoter (IP), thereby enhancing its own expression. This transactivation is repressed by nuclear factor I. Also transactivates the long terminal repeat (LTR) promoter, thereby inducing structural gene expression, initiating the late phase of infection. It is therefore a key regulator of viral gene expression. It directly binds to and activates DNA target sites of viral promoters and those of distinct cellular genes. Required for viral replication. In Felis catus (Cat), this protein is Protein Bel-1 (bel1).